We begin with the raw amino-acid sequence, 718 residues long: Putative proline-rich receptor-like protein kinase PERK11 (718 aa).

The segment at 1–256 (MDKVQQQADL…GGTSQQSNES (256 aa)) is disordered. Residues 1 to 262 (MDKVQQQADL…SNESNYTEKT (262 aa)) lie on the Extracellular side of the membrane. Pro residues-rich tracts occupy residues 45 to 105 (ATSP…PPQS), 115 to 132 (IPFPKPQLPPPSLFPPPS), and 157 to 167 (LPSPPSTPFSP). Low complexity-rich tracts occupy residues 168-203 (PSQENSGSQGSPPLSSLLPPMLPLNPNSPGNPLQPL) and 211-244 (SNRVPSSSSSPSPPSLSGSNNHSGGSNRHNANSN). N-linked (GlcNAc...) asparagine glycans are attached at residues N231, N254, and N257. The chain crosses the membrane as a helical span at residues 263 to 283 (VIGIGIAGVLVILFIAGVFFV). The Cytoplasmic portion of the chain corresponds to 284-718 (RRKQKKGSSS…RAFNTSHRNH (435 aa)). Positions 314 to 348 (HYRQKPGNGNSSAQNSSPDTNSLGNPKHGRGTPDS) are disordered. A compositionally biased stretch (polar residues) spans 320–337 (GNGNSSAQNSSPDTNSLG). At T359 the chain carries Phosphothreonine. Residues 370–649 (FCKSFVVGEG…VRALDTRDDL (280 aa)) enclose the Protein kinase domain. Residues 376-384 (VGEGGFGCV) and K398 each bind ATP. A Phosphotyrosine modification is found at Y443. The active-site Proton acceptor is the D494. Phosphoserine is present on residues S498 and S527. A phosphothreonine mark is found at T528 and T533. Y541 carries the phosphotyrosine modification. The disordered stretch occupies residues 683-718 (SSDLGTNTGYYPSQDYATSHEYESESRAFNTSHRNH). Polar residues-rich tracts occupy residues 685-699 (DLGTNTGYYPSQDYA) and 709-718 (RAFNTSHRNH).

This sequence belongs to the protein kinase superfamily. Ser/Thr protein kinase family. In terms of tissue distribution, mostly expressed in flower buds.

The protein resides in the cell membrane. The enzyme catalyses L-seryl-[protein] + ATP = O-phospho-L-seryl-[protein] + ADP + H(+). The catalysed reaction is L-threonyl-[protein] + ATP = O-phospho-L-threonyl-[protein] + ADP + H(+). In Arabidopsis thaliana (Mouse-ear cress), this protein is Putative proline-rich receptor-like protein kinase PERK11 (PERK11).